We begin with the raw amino-acid sequence, 369 residues long: Flagellar P-ring protein (369 aa).

An N-terminal signal peptide occupies residues 1–24; the sequence is MSKTISLLKFIICILISLCSFTYA.

Belongs to the FlgI family. The basal body constitutes a major portion of the flagellar organelle and consists of four rings (L,P,S, and M) mounted on a central rod.

The protein localises to the bacterial flagellum basal body. In terms of biological role, assembles around the rod to form the L-ring and probably protects the motor/basal body from shearing forces during rotation. This is Flagellar P-ring protein from Buchnera aphidicola subsp. Schizaphis graminum (strain Sg).